Reading from the N-terminus, the 507-residue chain is MVTIRADEISNIIRERIEQYNREIKIVNTGTVLQVGDGIARIHGLDEVMAGELVEFEEGTIGIALNLESSNVGVVLMGDGLMIQEGSSVKATGRIAQIPVSESYLGRVINALAKPIDGRGEISASESRLIESPAPGIISRRSVYEPLQTGLIAIDSMIPIGRGQRELIIGDRQTGKTAVATDTILNQKGQNVICVYVAIGQKASSVAQVVTTFQERGAMEYTIVVAETADSSATLQYLAPYTGAALAEYFMYRERHTLIIYDDLSKQAQAYRQMSLLLRRPPGREAYPGDVFYLHSRLLERAAKSSSRLGEGSMTALPIVETQSGDVSAYIPTNVISITDGQIFLSADLFNAGIRPAINVGISVSRVGSAAQIKAMKQVAGKSKLELAQFAELEAFAQFASDLDKATQNQLARGQRLRELLKQSQAAPLRVEEQVATIYTGANGYLDSLEIGQVKKFLVQLRTHLKTNKPQFQEIISSTKTLTGDAEALLKEAIQEQLELFLLQEQT.

ATP is bound at residue 170 to 177 (GDRQTGKT).

This sequence belongs to the ATPase alpha/beta chains family. F-type ATPases have 2 components, CF(1) - the catalytic core - and CF(0) - the membrane proton channel. CF(1) has five subunits: alpha(3), beta(3), gamma(1), delta(1), epsilon(1). CF(0) has four main subunits: a, b, b' and c.

The protein localises to the plastid. The protein resides in the chloroplast thylakoid membrane. It carries out the reaction ATP + H2O + 4 H(+)(in) = ADP + phosphate + 5 H(+)(out). Its function is as follows. Produces ATP from ADP in the presence of a proton gradient across the membrane. The alpha chain is a regulatory subunit. This chain is ATP synthase subunit alpha, chloroplastic, found in Ceratophyllum demersum (Rigid hornwort).